Consider the following 177-residue polypeptide: Large ribosomal subunit protein uL6 (177 aa).

Belongs to the universal ribosomal protein uL6 family. Part of the 50S ribosomal subunit.

This protein binds to the 23S rRNA, and is important in its secondary structure. It is located near the subunit interface in the base of the L7/L12 stalk, and near the tRNA binding site of the peptidyltransferase center. The protein is Large ribosomal subunit protein uL6 of Methanosarcina barkeri (strain Fusaro / DSM 804).